Reading from the N-terminus, the 590-residue chain is Phosphate-repressible phosphate permease pho-4 (590 aa).

8 helical membrane passes run 6 to 26 (FDYLLAIGTIFAALDAWNIGA), 44 to 64 (YLQAMILGSIMEFAGSVGVGA), 85 to 105 (ALLMLGMVCAVVASSIYLTMA), 118 to 138 (IMGGVIGMGIAAVGADGVQWV), 149 to 169 (VFLAWVIAPGLAGAFASIIFL), 186 to 206 (FVMVPIYFGITAALLCMLLLW), 220 to 240 (IAGTIIGVGAAWALLVTIFLM), and 246 to 266 (IVILEDWQLRFWHIPLGPLLL). Topologically, residues 267–466 (RRGEVPPPPA…GALPEKGKAD (200 aa)) are cytoplasmic. A disordered region spans residues 297–361 (ARRAAQNGDS…PQIKTMVGPR (65 aa)). The span at 313–322 (VTSSTSNPSA) shows a compositional bias: polar residues. Positions 325–345 (DGEKGATITKDDSSYSHDHSE) are enriched in basic and acidic residues. 4 consecutive transmembrane segments (helical) span residues 467–487 (VPVWILVFGASCLVIGLWTYG), 506–525 (GFSMELGSAVTVILATRLKL), 527–547 (VSTTQCITGATVGVGLCSGTW), and 561–581 (GWFITLPVAGIISGCLMGIII).

It belongs to the inorganic phosphate transporter (PiT) (TC 2.A.20) family.

The protein resides in the cell membrane. Phosphate transport activity is competitively inhibited by vanadate and arsenate. Its function is as follows. High-affinity transporter for external inorganic phosphate. Acts probably as a sodium-phosphate symporter. Component of the high affinity phosphate transport system II (ptsII) necessary for scavenging phosphorus from the environment under conditions of limiting phosphorus. This is Phosphate-repressible phosphate permease pho-4 from Neurospora crassa (strain ATCC 24698 / 74-OR23-1A / CBS 708.71 / DSM 1257 / FGSC 987).